Here is a 340-residue protein sequence, read N- to C-terminus: Pseudaminic acid synthase (340 aa).

The 57-residue stretch at 281 to 337 (SLFVIKDIQKGEALTENNIKALRPNLGLHPKFYKEILGQKASKFLKANTPLSADDIE) folds into the AFP-like domain.

Belongs to the pseudaminic acid synthase family. It depends on a divalent metal cation as a cofactor.

The catalysed reaction is 2,4-diacetamido-2,4,6-trideoxy-beta-L-altrose + phosphoenolpyruvate + H2O = pseudaminate + phosphate. Catalyzes the fifth step in the biosynthesis of pseudaminic acid, a sialic-acid-like sugar that is used to modify flagellin. Catalyzes the condensation of phosphoenolpyruvate with 2,4-diacetamido-2,4,6-trideoxy-beta-l-altropyranose, forming pseudaminic acid. The sequence is that of Pseudaminic acid synthase (pseI) from Helicobacter pylori (strain ATCC 700392 / 26695) (Campylobacter pylori).